Consider the following 366-residue polypeptide: Isocitrate dehydrogenase [NAD] subunit alpha, mitochondrial (366 aa).

The N-terminal 27 residues, 1–27, are a transit peptide targeting the mitochondrion; sequence MAGSAWVSKVSRLLGAFHNTKQVTRGF. Lys77 is modified (N6-succinyllysine). Thr101 is modified (phosphothreonine). Substrate contacts are provided by Arg115, Arg125, and Arg146. Position 223 is an N6-acetyllysine (Lys223). Mg(2+) is bound by residues Asp233, Asp257, and Asp261. Position 343 is an N6-acetyllysine; alternate (Lys343). Lys343 is subject to N6-succinyllysine; alternate. Position 350 is an N6-succinyllysine (Lys350).

It belongs to the isocitrate and isopropylmalate dehydrogenases family. As to quaternary structure, heterooligomer of subunits alpha (IDH3A), beta (IDH3B), and gamma (IDH3G) in the apparent ratio of 2:1:1. The heterodimer containing one IDH3A and one IDH3B subunit and the heterodimer containing one IDH3A and one IDH3G subunit assemble into a heterotetramer (which contains two subunits of IDH3A, one of IDH3B and one of IDH3G) and further into the heterooctamer. It depends on Mg(2+) as a cofactor. Mn(2+) serves as cofactor. Expressed in brown adipose tissue (BAT).

It localises to the mitochondrion. The catalysed reaction is D-threo-isocitrate + NAD(+) = 2-oxoglutarate + CO2 + NADH. Its activity is regulated as follows. The heterotetramer and the heterodimer composed of IDH3A and IDH3G subunits can be allosterically activated by citrate (CIT) or/and ADP, and the two activators can act independently or synergistically. The heterodimer composed of IDH3A and IDH3B subunits cannot be allosterically regulated and the allosteric regulation of the heterotetramer is through the IDH3G subunit and not the IDH3B subunit. The IDH3G subunit contains the allosteric site which consists of a CIT-binding site and an ADP-binding site, and the binding of CIT and ADP causes conformational changes at the allosteric site which are transmitted to the active site in the catalytic subunit (IDH3A) through a cascade of conformational changes at the heterodimer interface, leading to stabilization of the isocitrate-binding at the active site and thus activation of the enzyme. ATP can activate the heterotetramer and the heterodimer composed of IDH3A and IDH3G subunits at low concentrations but inhibits their activities at high concentrations, whereas ATP exhibits only inhibitory effect on the heterodimer composed of IDH3A and IDH3B subunits. Functionally, catalytic subunit of the enzyme which catalyzes the decarboxylation of isocitrate (ICT) into alpha-ketoglutarate. The heterodimer composed of the alpha (IDH3A) and beta (IDH3B) subunits and the heterodimer composed of the alpha (IDH3A) and gamma (IDH3G) subunits, have considerable basal activity but the full activity of the heterotetramer (containing two subunits of IDH3A, one of IDH3B and one of IDH3G) requires the assembly and cooperative function of both heterodimers. This Rattus norvegicus (Rat) protein is Isocitrate dehydrogenase [NAD] subunit alpha, mitochondrial.